A 122-amino-acid polypeptide reads, in one-letter code: Small ribosomal subunit protein uS13 (122 aa).

The segment at 95–122 (GLPVRGQRTHTNARTRKGPAKSIAGKKK) is disordered.

Belongs to the universal ribosomal protein uS13 family. In terms of assembly, part of the 30S ribosomal subunit. Forms a loose heterodimer with protein S19. Forms two bridges to the 50S subunit in the 70S ribosome.

Located at the top of the head of the 30S subunit, it contacts several helices of the 16S rRNA. In the 70S ribosome it contacts the 23S rRNA (bridge B1a) and protein L5 of the 50S subunit (bridge B1b), connecting the 2 subunits; these bridges are implicated in subunit movement. Contacts the tRNAs in the A and P-sites. This chain is Small ribosomal subunit protein uS13, found in Rhodopseudomonas palustris (strain BisB18).